Reading from the N-terminus, the 425-residue chain is Sensor histidine kinase NarS (425 aa).

A run of 6 helical transmembrane segments spans residues 42–62, 71–91, 107–127, 130–150, 155–175, and 181–201; these read IASV…VVGT, IVLI…AYSA, LEPF…QLLS, GIYP…DVST, VVLA…PVML, and PETI…LMVV. The 202-residue stretch at 224–425 folds into the Histidine kinase domain; that stretch reads QTMTASEVLQ…HVCVELPLKR (202 aa). H241 carries the phosphohistidine; by autocatalysis modification.

Autophosphorylated on His-241.

The protein resides in the cell membrane. The enzyme catalyses ATP + protein L-histidine = ADP + protein N-phospho-L-histidine.. Its function is as follows. Member of the two-component regulatory system NarS/NarL involved in gene expression during aerobic nitrate metabolism. Plays therefore a crucial role in anaerobic survival of mycobacteria in host. Functions as a sensor protein kinase which is autophosphorylated at a histidine residue and transfers its phosphate group to the conserved aspartic acid residue in the regulatory domain of NarL. In turn, NarL binds to the upstream promoter regions of target genes to regulate their expression during aerobic nitrate metabolism. This chain is Sensor histidine kinase NarS, found in Mycobacterium tuberculosis (strain ATCC 25618 / H37Rv).